A 157-amino-acid polypeptide reads, in one-letter code: UPF0225 protein PA14_50900 (157 aa).

This sequence belongs to the UPF0225 family.

The chain is UPF0225 protein PA14_50900 from Pseudomonas aeruginosa (strain UCBPP-PA14).